We begin with the raw amino-acid sequence, 170 residues long: Ureidoglycolate lyase (170 aa).

The protein belongs to the ureidoglycolate lyase family. In terms of assembly, homodimer. Ni(2+) is required as a cofactor.

It carries out the reaction (S)-ureidoglycolate = urea + glyoxylate. Its pathway is nitrogen metabolism; (S)-allantoin degradation. Catalyzes the catabolism of the allantoin degradation intermediate (S)-ureidoglycolate, generating urea and glyoxylate. Involved in the utilization of allantoin as nitrogen source. The polypeptide is Ureidoglycolate lyase (Pseudomonas savastanoi pv. phaseolicola (strain 1448A / Race 6) (Pseudomonas syringae pv. phaseolicola (strain 1448A / Race 6))).